A 98-amino-acid polypeptide reads, in one-letter code: Aspartyl/glutamyl-tRNA(Asn/Gln) amidotransferase subunit C (98 aa).

Belongs to the GatC family. Heterotrimer of A, B and C subunits.

The catalysed reaction is L-glutamyl-tRNA(Gln) + L-glutamine + ATP + H2O = L-glutaminyl-tRNA(Gln) + L-glutamate + ADP + phosphate + H(+). The enzyme catalyses L-aspartyl-tRNA(Asn) + L-glutamine + ATP + H2O = L-asparaginyl-tRNA(Asn) + L-glutamate + ADP + phosphate + 2 H(+). In terms of biological role, allows the formation of correctly charged Asn-tRNA(Asn) or Gln-tRNA(Gln) through the transamidation of misacylated Asp-tRNA(Asn) or Glu-tRNA(Gln) in organisms which lack either or both of asparaginyl-tRNA or glutaminyl-tRNA synthetases. The reaction takes place in the presence of glutamine and ATP through an activated phospho-Asp-tRNA(Asn) or phospho-Glu-tRNA(Gln). In Beutenbergia cavernae (strain ATCC BAA-8 / DSM 12333 / CCUG 43141 / JCM 11478 / NBRC 16432 / NCIMB 13614 / HKI 0122), this protein is Aspartyl/glutamyl-tRNA(Asn/Gln) amidotransferase subunit C.